The primary structure comprises 426 residues: Trigger factor 1 (426 aa).

The PPIase FKBP-type domain occupies 163–248 (QDTVNIDFAG…VNKLKRKEYA (86 aa)).

The protein belongs to the FKBP-type PPIase family. Tig subfamily.

Its subcellular location is the cytoplasm. The catalysed reaction is [protein]-peptidylproline (omega=180) = [protein]-peptidylproline (omega=0). Involved in protein export. Acts as a chaperone by maintaining the newly synthesized protein in an open conformation. Functions as a peptidyl-prolyl cis-trans isomerase. The polypeptide is Trigger factor 1 (Desulfitobacterium hafniense (strain Y51)).